The chain runs to 3491 residues: Erythronolide synthase EryA1 (3491 aa).

The segment at Met1–Ala484 is loading domain. The acyltransferase 1 stretch occupies residues Val57–Ala372. Ser145 functions as the Acyl-ester intermediate; for acyltransferase 1 activity in the catalytic mechanism. Residues Pro386–Arg410 form a disordered region. The segment covering Ser391 to Ser400 has biased composition (basic residues). The Carrier 1 domain maps to Arg412–Thr487. An O-(pantetheine 4'-phosphoryl)serine modification is found at Ser447. The 425-residue stretch at Gly504–Glu928 folds into the Ketosynthase family 3 (KS3) 1 domain. Module regions lie at residues Val507 to Ala1958 and Ile1982 to Asp3404. Cys677 functions as the Acyl-thioester intermediate; for beta-ketoacyl synthase 1 activity in the catalytic mechanism. Active-site for beta-ketoacyl synthase 1 activity residues include His812 and His850. An acyltransferase 2 region spans residues Val1031–Val1352. The active-site Acyl-ester intermediate; for acyltransferase 2 activity is Ser1128. The beta-ketoacyl reductase 1 stretch occupies residues Gly1613 to Ala1790. NADP(+) contacts are provided by residues Thr1621–Val1624, Ser1644–Gly1647, Asp1673–Val1674, Lys1723, and Phe1745–Ser1746. The active-site For beta-ketoacyl reductase 1 activity is Tyr1760. A Carrier 2 domain is found at Glu1886 to Leu1961. Ser1921 bears the O-(pantetheine 4'-phosphoryl)serine mark. The region spanning Asp1979–Glu2402 is the Ketosynthase family 3 (KS3) 2 domain. Cys2148 (acyl-thioester intermediate; for beta-ketoacyl synthase 2 activity) is an active-site residue. Active-site for beta-ketoacyl synthase 2 activity residues include His2283 and His2323. The segment at Val2508–Ala2827 is acyltransferase 3. Ser2598 acts as the Acyl-ester intermediate; for acyltransferase 3 activity in catalysis. Residues Gly3057–Ala3233 are beta-ketoacyl reductase 2. NADP(+)-binding positions include Thr3065–Leu3068, Ser3088–Gly3091, Asp3117–Val3118, Lys3168, and Phe3188–Ser3189. The active-site For beta-ketoacyl reductase 2 activity is Tyr3203. One can recognise a Carrier 3 domain in the interval Glu3329–Leu3407. At Ser3367 the chain carries O-(pantetheine 4'-phosphoryl)serine. The disordered stretch occupies residues Gln3456 to Asp3491. Acidic residues predominate over residues Asp3471–Leu3481.

Homodimer. Erythronolide synthase is composed of EryAI, EryAII and EryAIII multimodular (2 modules) polypeptides each coding for a functional synthase subunit which participates in 2 of the six FAS-like elongation steps required for formation of the polyketide. Module 1, 2, 3, 4, 5, and 6 participating in biosynthesis steps 1, 2, 3, 4, 5, and 6, respectively. It depends on pantetheine 4'-phosphate as a cofactor.

The catalysed reaction is 6 (S)-methylmalonyl-CoA + propanoyl-CoA + 6 NADPH + 12 H(+) = 6-deoxyerythronolide B + 6 CO2 + 6 NADP(+) + 7 CoA + H2O. It participates in antibiotic biosynthesis; erythromycin biosynthesis. In terms of biological role, involved in the biosynthesis of antibiotic erythromycin via the biosynthesis of its aglycone precursor, 6-deoxyerythronolide B (6-dEB). In Saccharopolyspora erythraea (Streptomyces erythraeus), this protein is Erythronolide synthase EryA1 (eryA).